A 1216-amino-acid polypeptide reads, in one-letter code: Apical endosomal glycoprotein (1216 aa).

Residues 1 to 21 (MCLPSCLLSIWVLFMAAQSLG) form the signal peptide. Topologically, residues 22–1155 (KTWVPDHCRS…SQGRVAAPVS (1134 aa)) are extracellular. The 28-residue stretch at 27–54 (DHCRSPTEATCNFVCDCGDCSDEAQCGF) folds into the LDL-receptor class A 1; truncated domain. Residues 62 to 224 (NTPFTCNFEQ…DDMEFWDCGL (163 aa)) form the MAM 1 domain. Asn-205 is a glycosylation site (N-linked (GlcNAc...) asparagine). Positions 229–269 (ARCPLGHHHCQNKACVEPHQLCDGEDNCGDSSDEDPLICSH) constitute an LDL-receptor class A 2 domain. 3 cysteine pairs are disulfide-bonded: Cys-231/Cys-243, Cys-238/Cys-256, and Cys-250/Cys-267. The region spanning 268–427 (SHHMATDFET…DLIMSNHCIL (160 aa)) is the MAM 2 domain. Residues Asn-291, Asn-341, and Asn-368 are each glycosylated (N-linked (GlcNAc...) asparagine). Positions 454–491 (RTCDAGHLSCDELCVPPEQLCDFQQHCAEGEDEEKCGT) constitute an LDL-receptor class A 3 domain. 3 disulfides stabilise this stretch: Cys-456/Cys-467, Cys-463/Cys-480, and Cys-474/Cys-489. MAM domains are found at residues 492–647 (TDFE…DCNP), 654–813 (DQEV…PCWA), 812–973 (WAAK…PCAQ), and 972–1142 (AQPG…HCKQ). An N-linked (GlcNAc...) asparagine glycan is attached at Asn-639. Asn-839 carries an N-linked (GlcNAc...) asparagine glycan. Residues 1156–1176 (VPVAVGGALLLFLLLLGLGGW) form a helical membrane-spanning segment. Residues 1177 to 1216 (HWLQKQHLPCQSTDAAASGFDNILFNADQVTLPESITSNP) lie on the Cytoplasmic side of the membrane.

In terms of tissue distribution, apical endosomal tubules of developing rat intestinal epithelial cells.

The protein localises to the membrane. Functionally, probably involved in the sorting and selective transport of receptors and ligands across polarized epithelia. The chain is Apical endosomal glycoprotein (Mamdc4) from Rattus norvegicus (Rat).